The following is a 209-amino-acid chain: Protein-L-isoaspartate O-methyltransferase (209 aa).

The active site involves Ser-55.

The protein belongs to the methyltransferase superfamily. L-isoaspartyl/D-aspartyl protein methyltransferase family.

It is found in the cytoplasm. The catalysed reaction is [protein]-L-isoaspartate + S-adenosyl-L-methionine = [protein]-L-isoaspartate alpha-methyl ester + S-adenosyl-L-homocysteine. In terms of biological role, catalyzes the methyl esterification of L-isoaspartyl residues in peptides and proteins that result from spontaneous decomposition of normal L-aspartyl and L-asparaginyl residues. It plays a role in the repair and/or degradation of damaged proteins. This is Protein-L-isoaspartate O-methyltransferase from Anaeromyxobacter dehalogenans (strain 2CP-1 / ATCC BAA-258).